The primary structure comprises 243 residues: Adenosylcobinamide-GDP ribazoletransferase (243 aa).

The next 5 membrane-spanning stretches (helical) occupy residues 31–51, 61–81, 109–129, 134–154, and 188–208; these read LLWY…AHLL, AAII…DGLA, IAVV…LSLL, GIYL…LLAT, and LLLG…FVWL.

This sequence belongs to the CobS family. The cofactor is Mg(2+).

It is found in the cell inner membrane. The enzyme catalyses alpha-ribazole + adenosylcob(III)inamide-GDP = adenosylcob(III)alamin + GMP + H(+). It carries out the reaction alpha-ribazole 5'-phosphate + adenosylcob(III)inamide-GDP = adenosylcob(III)alamin 5'-phosphate + GMP + H(+). It functions in the pathway cofactor biosynthesis; adenosylcobalamin biosynthesis; adenosylcobalamin from cob(II)yrinate a,c-diamide: step 7/7. Its function is as follows. Joins adenosylcobinamide-GDP and alpha-ribazole to generate adenosylcobalamin (Ado-cobalamin). Also synthesizes adenosylcobalamin 5'-phosphate from adenosylcobinamide-GDP and alpha-ribazole 5'-phosphate. The protein is Adenosylcobinamide-GDP ribazoletransferase of Ectopseudomonas mendocina (strain ymp) (Pseudomonas mendocina).